The sequence spans 432 residues: Probable pectate lyase 22 (432 aa).

An N-terminal signal peptide occupies residues 1–45; that stretch reads MFRPNSLLIPSNLSTTKSQRNTMLNSSYLSFALIFFCCILFSALA. An N-linked (GlcNAc...) asparagine glycan is attached at Asn-65. Ca(2+) contacts are provided by Asp-228, Asp-252, and Asp-256. The active site involves Arg-308.

This sequence belongs to the polysaccharide lyase 1 family. The cofactor is Ca(2+).

The enzyme catalyses Eliminative cleavage of (1-&gt;4)-alpha-D-galacturonan to give oligosaccharides with 4-deoxy-alpha-D-galact-4-enuronosyl groups at their non-reducing ends.. It participates in glycan metabolism; pectin degradation; 2-dehydro-3-deoxy-D-gluconate from pectin: step 2/5. The chain is Probable pectate lyase 22 from Arabidopsis thaliana (Mouse-ear cress).